The sequence spans 293 residues: Nucleotide-binding protein cauri_1197 (293 aa).

16 to 23 serves as a coordination point for ATP; the sequence is GMSGGGLT. 67 to 70 contacts GTP; that stretch reads DVRS.

This sequence belongs to the RapZ-like family.

In terms of biological role, displays ATPase and GTPase activities. This chain is Nucleotide-binding protein cauri_1197, found in Corynebacterium aurimucosum (strain ATCC 700975 / DSM 44827 / CIP 107346 / CN-1) (Corynebacterium nigricans).